We begin with the raw amino-acid sequence, 284 residues long: MKLIIVSGRSGSGKSVALRVLEDLGYYCVDNIPINLLPALTHTVINDYENVAVSLDVRNLPKDPEDIPEIIAYLPKAVDVNTLFLDADDNDLIRRFSETRRLHPLIKENMALDQAIALEKSLLEPISTNADLYINTSQLSPHQLADLVRERILGKKTGSMVLVFESFGFKHGIPVDADYVFDARFLPNPFWEKSLKGQTGVDQEVKDFLASQAIVTKFIWQINSFMMTWLPHLERNNRSYVTIAIGCTGGKHRSVYIAEMLAKNFRKERDDIQTHHRDIDIKST.

8 to 15 lines the ATP pocket; the sequence is GRSGSGKS. Position 56-59 (56-59) interacts with GTP; it reads DVRN.

Belongs to the RapZ-like family.

Functionally, displays ATPase and GTPase activities. This chain is Nucleotide-binding protein CPS_4546, found in Colwellia psychrerythraea (strain 34H / ATCC BAA-681) (Vibrio psychroerythus).